A 397-amino-acid chain; its full sequence is Argininosuccinate synthase (397 aa).

ATP is bound at residue 9 to 17 (AYSGGLDTT). An L-citrulline-binding site is contributed by Y87. An ATP-binding site is contributed by G117. L-aspartate-binding residues include T119, N123, and D124. N123 provides a ligand contact to L-citrulline. The L-citrulline site is built by R127, S174, S183, E259, and Y271.

Belongs to the argininosuccinate synthase family. Type 1 subfamily. Homotetramer.

It is found in the cytoplasm. The catalysed reaction is L-citrulline + L-aspartate + ATP = 2-(N(omega)-L-arginino)succinate + AMP + diphosphate + H(+). Its pathway is amino-acid biosynthesis; L-arginine biosynthesis; L-arginine from L-ornithine and carbamoyl phosphate: step 2/3. The protein is Argininosuccinate synthase of Pyrobaculum aerophilum (strain ATCC 51768 / DSM 7523 / JCM 9630 / CIP 104966 / NBRC 100827 / IM2).